Reading from the N-terminus, the 507-residue chain is Bifunctional purine biosynthesis protein PurH (507 aa).

In terms of domain architecture, MGS-like spans 1 to 149; it reads MSESKRIKTA…KNYNDVIIVA (149 aa).

The protein belongs to the PurH family.

The enzyme catalyses (6R)-10-formyltetrahydrofolate + 5-amino-1-(5-phospho-beta-D-ribosyl)imidazole-4-carboxamide = 5-formamido-1-(5-phospho-D-ribosyl)imidazole-4-carboxamide + (6S)-5,6,7,8-tetrahydrofolate. It carries out the reaction IMP + H2O = 5-formamido-1-(5-phospho-D-ribosyl)imidazole-4-carboxamide. The protein operates within purine metabolism; IMP biosynthesis via de novo pathway; 5-formamido-1-(5-phospho-D-ribosyl)imidazole-4-carboxamide from 5-amino-1-(5-phospho-D-ribosyl)imidazole-4-carboxamide (10-formyl THF route): step 1/1. It participates in purine metabolism; IMP biosynthesis via de novo pathway; IMP from 5-formamido-1-(5-phospho-D-ribosyl)imidazole-4-carboxamide: step 1/1. This chain is Bifunctional purine biosynthesis protein PurH, found in Bacteroides thetaiotaomicron (strain ATCC 29148 / DSM 2079 / JCM 5827 / CCUG 10774 / NCTC 10582 / VPI-5482 / E50).